The sequence spans 336 residues: Polyprenyl transferase dpasC (336 aa).

The helical transmembrane segment at 34–54 (LFTIFAGGMFLFVASFPTTAF) threads the bilayer. A glycan (N-linked (GlcNAc...) asparagine) is linked at Asn66. Helical transmembrane passes span 80 to 100 (ALCL…NDWI), 125 to 145 (QAML…HFML), 181 to 201 (YILG…IFHG), 205 to 225 (FAES…WTIF), 253 to 273 (HVHL…PMYL), 274 to 294 (NQFH…LSLL), and 311 to 331 (LHVD…IELL).

The protein belongs to the UbiA prenyltransferase family. Mg(2+) serves as cofactor.

It localises to the membrane. It participates in secondary metabolite biosynthesis; terpenoid biosynthesis. Its function is as follows. Polyprenyl transferase; part of the gene cluster that mediates the biosynthesis of the diterpenoid pyrones subglutinols A and B. The first step of the pathway is the synthesis of the alpha-pyrone moiety by the polyketide synthase dpasA via condensation of one acetyl-CoA starter unit with 3 malonyl-CoA units and 2 methylations. The alpha-pyrone is then combined with geranylgeranyl pyrophosphate (GGPP) formed by the GGPP synthase dpasD through the action of the prenyltransferase dpasC to yield a linear alpha-pyrone diterpenoid. Subsequent steps in the diterpenoid pyrone biosynthetic pathway involve the decalin core formation, which is initiated by the epoxidation of the C10-C11 olefin by the FAD-dependent oxidoreductase dpasE, and is followed by a cyclization cascade catalyzed by the terpene cyclase dpasB. The FAD-linked oxidoreductase dpasF is then involved in tetrahydrofuran (THF) ring formation at the C5 unit to complete the formation of subglutinols A and B. DpasF possesses also an additional catalytic ability of multi-step oxidations to generate a new DDP analog with an enone system at the C5 named FDDP A. The sequence is that of Polyprenyl transferase dpasC from Apiospora sacchari (Arthrinium sacchari).